The following is a 110-amino-acid chain: UPF0060 membrane protein BPSL1340 (110 aa).

Transmembrane regions (helical) follow at residues 9-29, 34-54, 64-84, and 86-106; these read ALFVLTAVAEIVGCYLPWLVL, PAWLLAPAALSLALFAWLLTL, AAYGGVYIAVALAWLRIVDGV, and LSRWDVAGAALALAGMSVIAL.

This sequence belongs to the UPF0060 family.

The protein localises to the cell inner membrane. The chain is UPF0060 membrane protein BPSL1340 from Burkholderia pseudomallei (strain K96243).